The sequence spans 216 residues: Urease accessory protein UreG (216 aa).

25 to 32 (GPVGSGKT) lines the GTP pocket.

Belongs to the SIMIBI class G3E GTPase family. UreG subfamily. As to quaternary structure, homodimer. UreD, UreF and UreG form a complex that acts as a GTP-hydrolysis-dependent molecular chaperone, activating the urease apoprotein by helping to assemble the nickel containing metallocenter of UreC. The UreE protein probably delivers the nickel.

It localises to the cytoplasm. Facilitates the functional incorporation of the urease nickel metallocenter. This process requires GTP hydrolysis, probably effectuated by UreG. The chain is Urease accessory protein UreG from Burkholderia pseudomallei (strain 1710b).